The following is a 501-amino-acid chain: 4,4'-diapophytoene desaturase (4,4'-diaponeurosporene-forming) (501 aa).

5–17 (VVGAGVTGLAAAA) provides a ligand contact to FAD.

It belongs to the carotenoid/retinoid oxidoreductase family. CrtN subfamily.

It carries out the reaction 15-cis-4,4'-diapophytoene + 3 FAD + 3 H(+) = all-trans-4,4'-diaponeurosporene + 3 FADH2. It participates in carotenoid biosynthesis; staphyloxanthin biosynthesis; staphyloxanthin from farnesyl diphosphate: step 2/5. Functionally, involved in the biosynthesis of the yellow-orange carotenoid staphyloxanthin, which plays a role in the virulence via its protective function against oxidative stress. Catalyzes three successive dehydrogenation reactions that lead to the introduction of three double bonds into 4,4'-diapophytoene (dehydrosqualene), with 4,4'-diapophytofluene and 4,4'-diapo-zeta-carotene as intermediates, and 4,4'-diaponeurosporene (the major deep-yellow pigment in staphylococci strains) as the end product. This chain is 4,4'-diapophytoene desaturase (4,4'-diaponeurosporene-forming), found in Staphylococcus haemolyticus (strain JCSC1435).